The primary structure comprises 261 residues: Putative imidazole glycerol phosphate synthase subunit hisF2 (261 aa).

Residue aspartate 138 is part of the active site.

This sequence belongs to the HisA/HisF family. Heterodimer of HisH and HisF.

Its subcellular location is the cytoplasm. It catalyses the reaction 5-[(5-phospho-1-deoxy-D-ribulos-1-ylimino)methylamino]-1-(5-phospho-beta-D-ribosyl)imidazole-4-carboxamide + L-glutamine = D-erythro-1-(imidazol-4-yl)glycerol 3-phosphate + 5-amino-1-(5-phospho-beta-D-ribosyl)imidazole-4-carboxamide + L-glutamate + H(+). It functions in the pathway amino-acid biosynthesis; L-histidine biosynthesis; L-histidine from 5-phospho-alpha-D-ribose 1-diphosphate: step 5/9. In terms of biological role, IGPS catalyzes the conversion of PRFAR and glutamine to IGP, AICAR and glutamate. The HisF subunit catalyzes the cyclization activity that produces IGP and AICAR from PRFAR using the ammonia provided by the HisH subunit. The sequence is that of Putative imidazole glycerol phosphate synthase subunit hisF2 (hisF2) from Prochlorococcus marinus (strain MIT 9313).